The following is a 725-amino-acid chain: Kinesin-like protein KIN-8A (725 aa).

Residues 1 to 32 are disordered; sequence MPVSTRSKVMKQERNEQENTNLNLPLRNPHQG. The 331-residue stretch at 151–481 folds into the Kinesin motor domain; that stretch reads RILVFVRLRP…LHWADRAKEI (331 aa). 243–250 contributes to the ATP binding site; it reads GATGAGKT. Coiled coils occupy residues 499–541 and 583–617; these read EGAD…AANN and ESLK…EHGL. Disordered stretches follow at residues 652–672 and 691–725; these read GSLR…RFAS and SPAL…HMKH. The segment covering 655–665 has biased composition (basic and acidic residues); that stretch reads RPKEKEKELKS.

This sequence belongs to the TRAFAC class myosin-kinesin ATPase superfamily. Kinesin family. KIN-8 subfamily.

The sequence is that of Kinesin-like protein KIN-8A from Arabidopsis thaliana (Mouse-ear cress).